Consider the following 208-residue polypeptide: Large ribosomal subunit protein uL4 (208 aa).

The segment at 45–95 is disordered; that stretch reads RQGTHKAKTRSEVRGGGKKPFRQKGTGNARQGSSRSPIHVGGGTIFGPQPH. Polar residues predominate over residues 69-80; that stretch reads GTGNARQGSSRS.

The protein belongs to the universal ribosomal protein uL4 family. In terms of assembly, part of the 50S ribosomal subunit.

Its function is as follows. One of the primary rRNA binding proteins, this protein initially binds near the 5'-end of the 23S rRNA. It is important during the early stages of 50S assembly. It makes multiple contacts with different domains of the 23S rRNA in the assembled 50S subunit and ribosome. Forms part of the polypeptide exit tunnel. The sequence is that of Large ribosomal subunit protein uL4 from Chlorobium chlorochromatii (strain CaD3).